The following is a 229-amino-acid chain: Uracil-DNA glycosylase (229 aa).

Asp64 (proton acceptor) is an active-site residue.

Belongs to the uracil-DNA glycosylase (UDG) superfamily. UNG family.

The protein localises to the cytoplasm. The enzyme catalyses Hydrolyzes single-stranded DNA or mismatched double-stranded DNA and polynucleotides, releasing free uracil.. Its function is as follows. Excises uracil residues from the DNA which can arise as a result of misincorporation of dUMP residues by DNA polymerase or due to deamination of cytosine. This is Uracil-DNA glycosylase from Escherichia coli O81 (strain ED1a).